A 618-amino-acid chain; its full sequence is Neurosecretory protein VGF (618 aa).

The N-terminal stretch at Met1 to Ala23 is a signal peptide. 3 disordered regions span residues Ala23–Gly46, Val86–Pro201, and Pro219–Leu262. Residues Pro26–Ser37 are compositionally biased toward pro residues. Residues Glu180–Arg195 show a composition bias toward low complexity. A coiled-coil region spans residues Leu301–Leu332. Pyrrolidone carboxylic acid is present on Gln310. The segment at Arg342–Gln603 is disordered. The segment covering Gly356 to Arg378 has biased composition (basic and acidic residues). Over residues Val379–Glu395 the composition is skewed to acidic residues. Residues Ala416–Glu434 show a composition bias toward basic and acidic residues. Ser421 bears the Phosphoserine mark. A Phosphothreonine modification is found at Thr425. The span at Gly435–Asp451 shows a compositional bias: acidic residues. Positions Pro490–Ala500 are enriched in pro residues. Basic and acidic residues predominate over residues His578 to Glu602.

In terms of processing, multiple peptides are derived from VGF, with activities in synaptic plasticity, antidepression, penile erection, autonomic activation, and increases in energy expenditure.

Its subcellular location is the secreted. The protein localises to the cytoplasmic vesicle. It is found in the secretory vesicle. Functionally, secreted polyprotein that is packaged and proteolytically processed by prohormone convertases PCSK1 and PCSK2 in a cell-type-specific manner. VGF and peptides derived from its processing play many roles in neurogenesis and neuroplasticity associated with learning, memory, depression and chronic pain. Its function is as follows. Plays a role in the control of body fluid homeostasis by regulating vasopressin release. Suppresses presynaptic glutamatergic neurons connected to vasopressin neurons. Plays a role in the control of body fluid homeostasis by regulating vasopressin release. Activates GABAergic interneurons which are inhibitory neurons of the nervous system and thereby suppresses presynaptic glutamatergic neurons. Also stimulates feeding behavior in an orexin-dependent manner in the hypothalamus. Functions as a positive regulator for the activation of orexin neurons resulting in elevated gastric acid secretion and gastric emptying. This is Neurosecretory protein VGF from Bos taurus (Bovine).